A 183-amino-acid polypeptide reads, in one-letter code: MHLLPELASHHAVSIPELLVSRDERQARQHAWLKHHPVPLVSFTVVAPGPIKDSEVTRRIFNHRVTALRALATKQGWQIQEQAALVSASGPEGMLSIAAPARDLKLATIELEHSHPLGRLWDIDVLTPEGEILSRRDYSLPPRRCLLCEQSAAVCARGKTHQLTDLLNRMEALLNDVDACNVN.

It belongs to the CitX family.

The enzyme catalyses apo-[citrate lyase ACP] + 2'-(5''-triphospho-alpha-D-ribosyl)-3'-dephospho-CoA = holo-[citrate lyase ACP] + diphosphate. Transfers 2-(5''-triphosphoribosyl)-3'-dephosphocoenzyme-A on a serine residue to the apo-acyl carrier protein (gamma chain) of the citrate lyase to yield holo-acyl carrier protein. This Shigella flexneri serotype 5b (strain 8401) protein is Apo-citrate lyase phosphoribosyl-dephospho-CoA transferase.